We begin with the raw amino-acid sequence, 555 residues long: Urocanate hydratase (555 aa).

NAD(+)-binding positions include G53–G54, Q131, G177–G179, E197, R202, N243–A244, Q264–H268, Y274–L275, and Y323. C411 is a catalytic residue. Position 493 (G493) interacts with NAD(+).

The protein belongs to the urocanase family. The cofactor is NAD(+).

The protein localises to the cytoplasm. The enzyme catalyses 4-imidazolone-5-propanoate = trans-urocanate + H2O. Its pathway is amino-acid degradation; L-histidine degradation into L-glutamate; N-formimidoyl-L-glutamate from L-histidine: step 2/3. Its function is as follows. Catalyzes the conversion of urocanate to 4-imidazolone-5-propionate. The chain is Urocanate hydratase from Maricaulis maris (strain MCS10) (Caulobacter maris).